Consider the following 1297-residue polypeptide: Protein ENHANCED DOWNY MILDEW 2 (1297 aa).

Residues glutamate 222–lysine 281 form a PHD-type 1; degenerate zinc finger. Zn(2+)-binding residues include cysteine 237, cysteine 241, cysteine 275, cysteine 278, cysteine 285, cysteine 288, cysteine 306, cysteine 311, histidine 316, cysteine 319, cysteine 346, and histidine 349. The PHD-type 2; atypical zinc finger occupies isoleucine 282–serine 352. The PHD-type 3; degenerate zinc finger occupies cysteine 351–glutamate 417. A Nuclear localization signal 1 motif is present at residues glutamine 445–histidine 452. Disordered regions lie at residues cysteine 471 to alanine 547 and threonine 562 to leucine 598. The span at serine 475–lysine 487 shows a compositional bias: low complexity. The short motif at threonine 492–serine 499 is the Nuclear localization signal 2 element. Over residues lysine 526–alanine 547 the composition is skewed to basic and acidic residues. 2 short sequence motifs (nuclear localization signal) span residues methionine 610–isoleucine 617 and leucine 979–lysine 986. Composition is skewed to basic and acidic residues over residues glutamine 969–glycine 990 and glutamate 1096–arginine 1109. Disordered stretches follow at residues glutamine 969–serine 1017, histidine 1085–arginine 1109, and phenylalanine 1260–aspartate 1297.

Interacts with WNK8 in nucleus; this interaction is involved in developmental processes regulation but not in RPP7-dependent disease resistance. Interacts with EML1 and EML2 in nucleus. Component of the ASI1-AIPP1-EDM2 (AAE) RNA regulatory complex composed of at least AIPP1/EDM3, ASI1 and EDM2 and may contain CPL2, AIPP2 and AIPP3/BDT1. Binds directly to AIPP1/EDM3. Co-associates with AIPP1/EDM3 to histone H3 lysine 9 dimethylation (H3K9me2)-marked chromatin and transcripts at a critical proximal polyadenylation site of RPP7 to hamper proximal transcript polyadeylation/termination. Post-translationally, phosphorylated by WNK8.

It localises to the nucleus. In terms of biological role, cellular antisilencing factor and regulator of genome DNA methylation patterns involved in the regulation of chromatin states. Together with SUVH4, monitors repressive epigenetic marks H3K27me1, H3K9me2, and prevents DNA-methylation at CHG sites, affecting especially the expression of transposons and developmentally important genes. Collaboratively with ASI1 and AIPP1/EDM3, the AAE complex regulates alternative RNA processing (e.g. alternative splicing) and epigenetic silencing (e.g. H3K9me2) of intronic heterochromatin-containing genes as well as genic heterochromatin-containing genes by promoting distal 3' polyadenylation. Epigenetic reader that binds DNA and contributes to transcriptional transposable element (TE) silencing by modulating levels of the repressive post-translational histone modifications (PHM) H3K9me2. In cv. Columbia, required for RPP7-dependent disease resistance against the Hyaloperonospora arabidopsidis isolate Hiks1, by promoting levels of RPP7 via alternative polyadenylation (APA), resulting from cooption of epigenetic information at the TE insertion locus COPIA-R7. Exhibits a global role in NLR (nucleotide-binding, leucine-rich repeat) defense genes epigenetic (e.g. H3K9me2 hallmarks) expression control; promotes the accumulation of RPP7, RPP4 and some other proteins, but mediates the repression of several other NLR products, probably to compensate for fitness penalties caused by defense mechanisms. Regulates development processes such as the formation of leaf pavement cells, leaf expansion, fertility and flowering. Prevents FLC accumulation to control flowering. Modulates stomatal development by regulating the methylation-mediated silencing of ERECTA receptor genes (e.g. ER, ERL1 and ERL2) and preventing cell divisions. The polypeptide is Protein ENHANCED DOWNY MILDEW 2 (Arabidopsis thaliana (Mouse-ear cress)).